The sequence spans 695 residues: Elongation factor G 1 (695 aa).

A tr-type G domain is found at 5-280 (ARYRNIGIFA…AVVDYLPSPT (276 aa)). GTP is bound by residues 14-21 (AHVDAGKT), 78-82 (DTPGH), and 132-135 (NKLD).

Belongs to the TRAFAC class translation factor GTPase superfamily. Classic translation factor GTPase family. EF-G/EF-2 subfamily.

It is found in the cytoplasm. Functionally, catalyzes the GTP-dependent ribosomal translocation step during translation elongation. During this step, the ribosome changes from the pre-translocational (PRE) to the post-translocational (POST) state as the newly formed A-site-bound peptidyl-tRNA and P-site-bound deacylated tRNA move to the P and E sites, respectively. Catalyzes the coordinated movement of the two tRNA molecules, the mRNA and conformational changes in the ribosome. This Pseudoalteromonas atlantica (strain T6c / ATCC BAA-1087) protein is Elongation factor G 1.